We begin with the raw amino-acid sequence, 599 residues long: Sulfite reductase [NADPH] flavoprotein alpha-component (599 aa).

In terms of domain architecture, Flavodoxin-like spans 64-202; it reads ITIISASQTG…AASEWRARVV (139 aa). FMN-binding positions include 70 to 75, 117 to 120, and 153 to 162; these read SQTGNA, STQG, and LGDSSYEFFC. An FAD-binding FR-type domain is found at 234–448; it reads DAPLAASLSV…IEHNDNFRLP (215 aa). FAD-binding positions include Thr-322, Ala-356, 386 to 389, 404 to 406, Tyr-410, and 419 to 422; these read RLYS, TVG, and GGAS. NADP(+) is bound by residues 519 to 520, 525 to 529, and Asp-561; these read SR and KIYVQ. Tyr-599 provides a ligand contact to FAD.

The protein belongs to the NADPH-dependent sulphite reductase flavoprotein subunit CysJ family. This sequence in the N-terminal section; belongs to the flavodoxin family. It in the C-terminal section; belongs to the flavoprotein pyridine nucleotide cytochrome reductase family. As to quaternary structure, alpha(8)-beta(8). The alpha component is a flavoprotein, the beta component is a hemoprotein. FAD serves as cofactor. FMN is required as a cofactor.

The enzyme catalyses hydrogen sulfide + 3 NADP(+) + 3 H2O = sulfite + 3 NADPH + 4 H(+). The protein operates within sulfur metabolism; hydrogen sulfide biosynthesis; hydrogen sulfide from sulfite (NADPH route): step 1/1. Component of the sulfite reductase complex that catalyzes the 6-electron reduction of sulfite to sulfide. This is one of several activities required for the biosynthesis of L-cysteine from sulfate. The flavoprotein component catalyzes the electron flow from NADPH -&gt; FAD -&gt; FMN to the hemoprotein component. In Escherichia coli O6:K15:H31 (strain 536 / UPEC), this protein is Sulfite reductase [NADPH] flavoprotein alpha-component.